Here is a 201-residue protein sequence, read N- to C-terminus: Peptidyl-tRNA hydrolase (201 aa).

Y14 serves as a coordination point for tRNA. H19 (proton acceptor) is an active-site residue. TRNA contacts are provided by Y64, N66, and N112.

It belongs to the PTH family. Monomer.

The protein localises to the cytoplasm. It catalyses the reaction an N-acyl-L-alpha-aminoacyl-tRNA + H2O = an N-acyl-L-amino acid + a tRNA + H(+). In terms of biological role, hydrolyzes ribosome-free peptidyl-tRNAs (with 1 or more amino acids incorporated), which drop off the ribosome during protein synthesis, or as a result of ribosome stalling. Its function is as follows. Catalyzes the release of premature peptidyl moieties from peptidyl-tRNA molecules trapped in stalled 50S ribosomal subunits, and thus maintains levels of free tRNAs and 50S ribosomes. The polypeptide is Peptidyl-tRNA hydrolase (Bradyrhizobium diazoefficiens (strain JCM 10833 / BCRC 13528 / IAM 13628 / NBRC 14792 / USDA 110)).